The sequence spans 209 residues: Uracil phosphoribosyltransferase (209 aa).

Residues R79, R104, and 131–139 contribute to the 5-phospho-alpha-D-ribose 1-diphosphate site; that span reads DPMLATGGS. Uracil-binding positions include I194 and 199–201; that span reads GDA. Position 200 (D200) interacts with 5-phospho-alpha-D-ribose 1-diphosphate.

It belongs to the UPRTase family. The cofactor is Mg(2+).

The catalysed reaction is UMP + diphosphate = 5-phospho-alpha-D-ribose 1-diphosphate + uracil. Its pathway is pyrimidine metabolism; UMP biosynthesis via salvage pathway; UMP from uracil: step 1/1. Its activity is regulated as follows. Allosterically activated by GTP. Its function is as follows. Catalyzes the conversion of uracil and 5-phospho-alpha-D-ribose 1-diphosphate (PRPP) to UMP and diphosphate. This is Uracil phosphoribosyltransferase from Alkaliphilus metalliredigens (strain QYMF).